We begin with the raw amino-acid sequence, 26 residues long: Thrombopoietin (26 aa).

It belongs to the EPO/TPO family.

It is found in the secreted. Functionally, lineage-specific cytokine affecting the proliferation and maturation of megakaryocytes from their committed progenitor cells. It acts at a late stage of megakaryocyte development. It may be the major physiological regulator of circulating platelets. This Sus scrofa (Pig) protein is Thrombopoietin (THPO).